Reading from the N-terminus, the 488-residue chain is E3 ubiquitin-protein ligase TRIM34 (488 aa).

An RING-type zinc finger spans residues 15–60 (CPICLELLTEPLSLDCGHSLCRACITVSNKEAVTSMGGKSSCPVCG). The segment at 92–134 (KKRDLCDHHGEKLLLFCKEDRKVICWLCERSQEHRGHHTVLTE) adopts a B box-type zinc-finger fold. Cys-97, His-100, Cys-119, and His-125 together coordinate Zn(2+). Residues 131 to 239 (VLTEEVFKEC…VRELISDVEC (109 aa)) are a coiled coil. Residues 283 to 488 (LSRMLQMFRE…APMTLCPPSS (206 aa)) form the B30.2/SPRY domain.

Belongs to the TRIM/RBCC family. Homotrimer. Interacts (via B-box and SPRY domain) with TRIM5. As to quaternary structure, (Microbial infection) Interacts (via the B30.2/SPRY domain) with HIV-1 capsid complexes. In terms of tissue distribution, is the most abundant form. It is highly expressed in the placenta, spleen, colon and peripheral blood leukocytes.

The protein resides in the cytoplasm. Its subcellular location is the mitochondrion. The enzyme catalyses S-ubiquitinyl-[E2 ubiquitin-conjugating enzyme]-L-cysteine + [acceptor protein]-L-lysine = [E2 ubiquitin-conjugating enzyme]-L-cysteine + N(6)-ubiquitinyl-[acceptor protein]-L-lysine.. The protein operates within protein modification; protein ubiquitination. Functionally, functions as antiviral protein and contributes to the defense against retroviral infections. Acts as a capsid-specific restriction factor with the help of TRIM5 and prevents infection from non-host-adapted retroviruses. During influenza A virus infection, promotes programmed cell death by targeting ZBP1 for 'Lys-63'-linked polyubiquitination. In turn, promotes ZBP1 recruitment of RIPK3 to mediate virus-induced programmed necrosis. Negatively regulates the function of mitochondria by enhancing mitochondrial depolarization leading to cytochrome c release and mitochondria-dependent apoptosis. Also promotes the formation of multinucleated giant cells by means of cell fusion and phagocytosis in epithelial cells. The polypeptide is E3 ubiquitin-protein ligase TRIM34 (TRIM34) (Homo sapiens (Human)).